A 96-amino-acid chain; its full sequence is ESAT-6-like protein EsxR (96 aa).

This sequence belongs to the WXG100 family. ESAT-6 subfamily.

It is found in the secreted. This is ESAT-6-like protein EsxR from Mycobacterium leprae (strain TN).